Consider the following 288-residue polypeptide: HTH-type transcriptional regulator CzcR (288 aa).

The 58-residue stretch at 1 to 58 (MELRDLQIFKCVAHHKSITGAAKELNYVQSNVTARIKQLENELKTPLFNRHKKGVSLS) folds into the HTH lysR-type domain. Residues 18-37 (ITGAAKELNYVQSNVTARIK) constitute a DNA-binding region (H-T-H motif).

It belongs to the LysR transcriptional regulatory family.

This chain is HTH-type transcriptional regulator CzcR (czcR), found in Bacillus subtilis (strain 168).